A 204-amino-acid polypeptide reads, in one-letter code: Inner membrane-spanning protein YciB (204 aa).

The next 6 membrane-spanning stretches (helical) occupy residues 3–23, 45–65, 70–90, 107–127, 145–165, and 168–188; these read AEISPLLKFVLELGPLMVFFF, IFIATGLFMIATATALTVSWI, LPIMPLISGIVVFVFGALTLW, LFGVILLGGLFFGQSLLGYVF, WGVFFLFLAVLNEVVWRMFTT, and WVAFKVWGTMPITIIFTMAQM.

This sequence belongs to the YciB family.

It is found in the cell inner membrane. Plays a role in cell envelope biogenesis, maintenance of cell envelope integrity and membrane homeostasis. The chain is Inner membrane-spanning protein YciB from Agrobacterium fabrum (strain C58 / ATCC 33970) (Agrobacterium tumefaciens (strain C58)).